Here is a 356-residue protein sequence, read N- to C-terminus: MKFLDEAKVYVRSGDGGNGCVAFRREKFIEFGGPNGGNGGRGGDVVIEAVDGLNTLIDYRYQQHFKAQRGGNGSGKDCHGAGGKSVVLKVPVGTQIFDEDRETLIHDFTTVGERFVLAQGGNGGFGNAHFKSPTNRAPRHANPGQPGEERWIWLRMKLIADAGLVGLPNAGKSTFLSKVSAAKPKIADYPFTTLHPQLGVVNADGREFVLADIPGLIEGAHEGAGLGDRFLGHVERCRVLLHLVDATCEHAGKAYKTVRHELEAYGGDLTDKVEIVALNKIDAVDPDELKKQKDRLKRAAKKTPLLISGATGEGVKEALRKLADVISEQPVSIKAKSTSDSAATEEPWAAPLPPQG.

In terms of domain architecture, Obg spans 1–159 (MKFLDEAKVY…RWIWLRMKLI (159 aa)). The 168-residue stretch at 160–327 (ADAGLVGLPN…ALRKLADVIS (168 aa)) folds into the OBG-type G domain. GTP-binding positions include 166–173 (GLPNAGKS), 191–195 (FTTLH), 212–215 (DIPG), 279–282 (NKID), and 308–310 (SGA). 2 residues coordinate Mg(2+): serine 173 and threonine 193. The interval 332-356 (SIKAKSTSDSAATEEPWAAPLPPQG) is disordered.

The protein belongs to the TRAFAC class OBG-HflX-like GTPase superfamily. OBG GTPase family. As to quaternary structure, monomer. The cofactor is Mg(2+).

The protein localises to the cytoplasm. Functionally, an essential GTPase which binds GTP, GDP and possibly (p)ppGpp with moderate affinity, with high nucleotide exchange rates and a fairly low GTP hydrolysis rate. Plays a role in control of the cell cycle, stress response, ribosome biogenesis and in those bacteria that undergo differentiation, in morphogenesis control. The sequence is that of GTPase Obg from Bradyrhizobium sp. (strain BTAi1 / ATCC BAA-1182).